A 282-amino-acid chain; its full sequence is Fibrinogen-like protein A (282 aa).

The signal sequence occupies residues 1 to 24; that stretch reads MFSFIMKAAILLILVGCISFCISS. The Fibrinogen C-terminal domain occupies 61–281; sequence SHSPEYPRDC…FAEMKLRNRS (221 aa). 2 disulfide bridges follow: Cys-70/Cys-101 and Cys-224/Cys-240.

The chain is Fibrinogen-like protein A from Apostichopus parvimensis (Warty sea cucumber).